The chain runs to 427 residues: Trigger factor (427 aa).

Residues 163–248 enclose the PPIase FKBP-type domain; that stretch reads GDTVVIDFVG…IHEVKAKEVP (86 aa).

It belongs to the FKBP-type PPIase family. Tig subfamily.

It localises to the cytoplasm. The catalysed reaction is [protein]-peptidylproline (omega=180) = [protein]-peptidylproline (omega=0). Its function is as follows. Involved in protein export. Acts as a chaperone by maintaining the newly synthesized protein in an open conformation. Functions as a peptidyl-prolyl cis-trans isomerase. The polypeptide is Trigger factor (Streptococcus pneumoniae (strain CGSP14)).